The chain runs to 350 residues: Transmembrane protein 185B (350 aa).

7 consecutive transmembrane segments (helical) span residues 16 to 36 (LIYA…DGVI), 41 to 61 (WAVF…ASVG), 81 to 101 (FKAM…EVLV), 111 to 131 (FWLL…AACV), 168 to 188 (WLVV…VVLY), 211 to 231 (VTMA…EVLL), and 240 to 260 (MFSY…LMAT).

It belongs to the TMEM185 family.

The protein localises to the membrane. This chain is Transmembrane protein 185B (TMEM185B), found in Bos taurus (Bovine).